A 200-amino-acid chain; its full sequence is Small ribosomal subunit protein uS4 (200 aa).

The interval 22-42 (TGKELEKRPYAPGPHGPNQRK) is disordered. The 61-residue stretch at 92–152 (ARLDNLVYRM…EKSNSLVVVK (61 aa)) folds into the S4 RNA-binding domain.

It belongs to the universal ribosomal protein uS4 family. As to quaternary structure, part of the 30S ribosomal subunit. Contacts protein S5. The interaction surface between S4 and S5 is involved in control of translational fidelity.

One of the primary rRNA binding proteins, it binds directly to 16S rRNA where it nucleates assembly of the body of the 30S subunit. Functionally, with S5 and S12 plays an important role in translational accuracy. This Bacillus mycoides (strain KBAB4) (Bacillus weihenstephanensis) protein is Small ribosomal subunit protein uS4.